Here is a 246-residue protein sequence, read N- to C-terminus: 3-deoxy-manno-octulosonate cytidylyltransferase (246 aa).

Belongs to the KdsB family.

The protein resides in the cytoplasm. The catalysed reaction is 3-deoxy-alpha-D-manno-oct-2-ulosonate + CTP = CMP-3-deoxy-beta-D-manno-octulosonate + diphosphate. Its pathway is nucleotide-sugar biosynthesis; CMP-3-deoxy-D-manno-octulosonate biosynthesis; CMP-3-deoxy-D-manno-octulosonate from 3-deoxy-D-manno-octulosonate and CTP: step 1/1. It functions in the pathway bacterial outer membrane biogenesis; lipopolysaccharide biosynthesis. Its function is as follows. Activates KDO (a required 8-carbon sugar) for incorporation into bacterial lipopolysaccharide in Gram-negative bacteria. The polypeptide is 3-deoxy-manno-octulosonate cytidylyltransferase (Rickettsia massiliae (strain Mtu5)).